The primary structure comprises 55 residues: uncharacterized protein (55 aa).

This is an uncharacterized protein from Escherichia coli (Bacteriophage T4).